The sequence spans 271 residues: Signal recognition particle receptor subunit beta (271 aa).

The chain crosses the membrane as a helical span at residues 37-57; sequence LLSVVVAVLAVLLTLVFWKLI. Residues 71 to 79 and 92 to 95 contribute to the GTP site; these read GLCDSGKTL and TQTS. Position 112 is a phosphoserine (Ser112). A GTP-binding site is contributed by Gly120. Residue Thr214 is modified to Phosphothreonine. Ala248 is a binding site for GTP.

This sequence belongs to the SRP receptor beta subunit family. In terms of assembly, heterodimer with SRPRA.

Its subcellular location is the endoplasmic reticulum membrane. Its function is as follows. Component of the signal recognition particle (SRP) complex receptor (SR). Ensures, in conjunction with the SRP complex, the correct targeting of the nascent secretory proteins to the endoplasmic reticulum membrane system. May mediate the membrane association of SR. The protein is Signal recognition particle receptor subunit beta (SRPRB) of Homo sapiens (Human).